The primary structure comprises 98 residues: Small ribosomal subunit protein uS17 (98 aa).

The protein belongs to the universal ribosomal protein uS17 family. In terms of assembly, part of the 30S ribosomal subunit.

Functionally, one of the primary rRNA binding proteins, it binds specifically to the 5'-end of 16S ribosomal RNA. This chain is Small ribosomal subunit protein uS17, found in Mesomycoplasma hyopneumoniae (strain 232) (Mycoplasma hyopneumoniae).